The primary structure comprises 509 residues: MWKASAGHAVSITQDDGGADDWETDPDFVNDVSEKEQRWGAKTVQGSGHQEHINIHKLRENVFQEHQTLKEKELETGPKASHGYGGKFGVEQDRMDKSAVGHEYQSKLSKHCSQVDSVRGFGGKFGVQMDRVDQSAVGFEYQGKTEKHASQKDYSSGFGGKYGVQADRVDKSAVGFDYQGKTEKHESQKDYSKGFGGKYGIDKDKVDKSAVGFEYQGKTEKHESQKDYVKGFGGKFGVQTDRQDKCALGWDHQEKLQLHESQKDYAKGFGGKYGVQKDRMDKNASTFEEVVQVPSAYQKTVPIEAVTSKTSNIRANFENLAKEREQEDRRKAEAERAQRMAQERQEQEEARRKLEEQARAKKQTPPASPSPQPAEDRPPSSPIYEDAAPLKAEPSYGSSEPEPEYSTEAAGLPEASNQQGLAYTSEPVYETTEVPGHYQAEDDTYDGYESDLGITAIALYDYQAAGDDEISFDPDDVITNIEMIDDGWWRGVCKGRYGLFPANYVELRQ.

The interval 1–28 (MWKASAGHAVSITQDDGGADDWETDPDF) is disordered. Residues 17 to 28 (GGADDWETDPDF) show a composition bias toward acidic residues. Cortactin repeat units lie at residues 80 to 116 (ASHGYGGKFGVEQDRMDKSAVGHEYQSKLSKHCSQVD), 117 to 153 (SVRGFGGKFGVQMDRVDQSAVGFEYQGKTEKHASQKD), 154 to 190 (YSSGFGGKYGVQADRVDKSAVGFDYQGKTEKHESQKD), 191 to 227 (YSKGFGGKYGIDKDKVDKSAVGFEYQGKTEKHESQKD), and 228 to 264 (YVKGFGGKFGVQTDRQDKCALGWDHQEKLQLHESQKD). Lysine 87 and lysine 107 each carry N6-acetyllysine. Residue serine 113 is modified to Phosphoserine. Residue arginine 119 is modified to Omega-N-methylarginine. Lysine 124 is modified (N6-acetyllysine). An N6-acetyllysine; alternate modification is found at lysine 144. A Glycyl lysine isopeptide (Lys-Gly) (interchain with G-Cter in SUMO1); alternate cross-link involves residue lysine 144. A Glycyl lysine isopeptide (Lys-Gly) (interchain with G-Cter in SUMO2); alternate cross-link involves residue lysine 144. The residue at position 150 (serine 150) is a Phosphoserine. An N6-acetyllysine mark is found at lysine 152, lysine 161, and lysine 171. At lysine 181 the chain carries N6-acetyllysine; alternate. Lysine 181 is covalently cross-linked (Glycyl lysine isopeptide (Lys-Gly) (interchain with G-Cter in SUMO1); alternate). Lysine 181 is covalently cross-linked (Glycyl lysine isopeptide (Lys-Gly) (interchain with G-Cter in SUMO2); alternate). Lysine 193 and lysine 198 each carry N6-acetyllysine. Lysine 218 is covalently cross-linked (Glycyl lysine isopeptide (Lys-Gly) (interchain with G-Cter in SUMO1)). At lysine 235 the chain carries N6-acetyllysine. Serine 261 carries the post-translational modification Phosphoserine. One copy of the Cortactin 6; truncated repeat lies at 265–287 (YAKGFGGKYGVQKDRMDKNASTF). An N6-acetyllysine mark is found at lysine 267, lysine 272, lysine 277, and lysine 309. Residues 311–364 (SNIRANFENLAKEREQEDRRKAEAERAQRMAQERQEQEEARRKLEEQARAKKQT) adopt a coiled-coil conformation. The segment at 318 to 409 (ENLAKEREQE…EPEPEYSTEA (92 aa)) is disordered. The span at 320–359 (LAKEREQEDRRKAEAERAQRMAQERQEQEEARRKLEEQAR) shows a compositional bias: basic and acidic residues. Residue threonine 364 is modified to Phosphothreonine. Phosphoserine is present on residues serine 368, serine 370, serine 380, and serine 381. At tyrosine 384 the chain carries Phosphotyrosine; by FAK1. Residues 393–406 (EPSYGSSEPEPEYS) are compositionally biased toward low complexity. At tyrosine 405 the chain carries Phosphotyrosine. The residue at position 406 (serine 406) is a Phosphoserine. Phosphotyrosine; by FAK1 occurs at positions 429 and 445. A phosphotyrosine; by SRC mark is found at tyrosine 445 and tyrosine 448. One can recognise an SH3 domain in the interval 451–509 (DLGITAIALYDYQAAGDDEISFDPDDVITNIEMIDDGWWRGVCKGRYGLFPANYVELRQ).

As to quaternary structure, part of a complex composed of NEDD9, AURKA and CTTN; within the complex NEDD9 acts as a scaffold protein and is required for complex formation. Interacts (via N-terminus) with NEDD9. Identified in a complex containing FGFR4, NCAM1, CDH2, PLCG1, FRS2, SRC, SHC1, GAP43 and CTTN. Forms a complex with ABL1 and MYLK. Interacts with SHANK2 and SHANK3 (via its SH3 domain). Interacts with PLXDC2 and SRCIN1. Interacts with SAMSN1 (via SH3 domain). Interacts (via SH3 domain) with ASAP1 (via Pro-rich region). Interacts with FER. Interacts with FGD1. Interacts with ABL2. Interacts with CTTNBP2NL; this interaction may target CTTN to stress fibers. Interacts with CTTNBP2; this interaction may target CTTN at the cell cortex or dendritic spines. Interacts (via SH3 domain) with DNM2. Interacts with ACTN1. Interacts with KCNA2 (via non-phosphorylated C-terminus). Interacts with PTK2/FAK1. Interacts with KCNH1. Interacts (via SH3 domain) with DIP2A (via N-terminus); the interaction enhances CTTN acetylation and is required for proper synaptic transmission. Interacts with XIRP1 (via N-terminus); the interaction promotes CTTN localization to intercalated disks in cardiomyocytes. In terms of processing, acetylated. Post-translationally, phosphorylated by FER. Phosphorylated in response to FGR activation. Phosphorylation by SRC promotes MYLK binding. Tyrosine phosphorylation in transformed cells may contribute to cellular growth regulation and transformation. Phosphorylated by PKN2 at both serine and threonine residues in a GTP-bound Rac1-dependent manner in hyaluronan-induced astrocytes and hence down-regulated CTTN ability to associate with filamentous actin. Phosphorylated on tyrosine residues in response to CHRM1 activation. Phosphorylated by PTK2/FAK1 in response to cell adhesion. Detected in liver (at protein level).

The protein localises to the cytoplasm. Its subcellular location is the cytoskeleton. It localises to the cell projection. The protein resides in the lamellipodium. It is found in the ruffle. The protein localises to the dendrite. Its subcellular location is the cell membrane. It localises to the podosome. The protein resides in the cell junction. It is found in the focal adhesion. The protein localises to the membrane. Its subcellular location is the clathrin-coated pit. It localises to the dendritic spine. The protein resides in the cell cortex. It is found in the endoplasmic reticulum. Contributes to the organization of the actin cytoskeleton and cell shape. Plays a role in the formation of lamellipodia and in cell migration. Plays a role in the regulation of neuron morphology, axon growth and formation of neuronal growth cones. Through its interaction with CTTNBP2, involved in the regulation of neuronal spine density. Plays a role in focal adhesion assembly and turnover. In complex with ABL1 and MYLK regulates cortical actin-based cytoskeletal rearrangement critical to sphingosine 1-phosphate (S1P)-mediated endothelial cell (EC) barrier enhancement. Plays a role in intracellular protein transport and endocytosis, and in modulating the levels of potassium channels present at the cell membrane. Plays a role in receptor-mediated endocytosis via clathrin-coated pits. Required for stabilization of KCNH1 channels at the cell membrane. The sequence is that of Src substrate cortactin from Rattus norvegicus (Rat).